The following is a 186-amino-acid chain: Thymidine kinase (186 aa).

8–15 (GPMYSGKT) contributes to the ATP binding site. Glu86 serves as the catalytic Proton acceptor. Phe118 provides a ligand contact to substrate. Zn(2+)-binding residues include Cys143 and Cys146. 162–166 (IIEIG) is a binding site for substrate. Cys175 and Cys178 together coordinate Zn(2+).

It belongs to the thymidine kinase family.

The enzyme catalyses thymidine + ATP = dTMP + ADP + H(+). The chain is Thymidine kinase (TK) from Choristoneura fumiferana (Spruce budworm moth).